Here is a 252-residue protein sequence, read N- to C-terminus: Type III pantothenate kinase (252 aa).

6 to 13 contacts ATP; the sequence is DIGNTTTE. Substrate contacts are provided by residues Y100 and 107–110; that span reads GADR. D109 acts as the Proton acceptor in catalysis. Residue D129 participates in K(+) binding. T132 is an ATP binding site. T184 is a substrate binding site.

Belongs to the type III pantothenate kinase family. As to quaternary structure, homodimer. The cofactor is NH4(+). K(+) is required as a cofactor.

It is found in the cytoplasm. The catalysed reaction is (R)-pantothenate + ATP = (R)-4'-phosphopantothenate + ADP + H(+). It participates in cofactor biosynthesis; coenzyme A biosynthesis; CoA from (R)-pantothenate: step 1/5. Functionally, catalyzes the phosphorylation of pantothenate (Pan), the first step in CoA biosynthesis. The protein is Type III pantothenate kinase of Sulfurihydrogenibium sp. (strain YO3AOP1).